We begin with the raw amino-acid sequence, 92 residues long: Protein AC152 (92 aa).

Acts as a transactivator of AC102 and HE65 genes. Therefore, participates in the global recruitment of G-actin to the host nucleus. The polypeptide is Protein AC152 (AC152) (Autographa californica nuclear polyhedrosis virus (AcMNPV)).